A 1938-amino-acid chain; its full sequence is Myosin-1 (1938 aa).

One can recognise a Myosin N-terminal SH3-like domain in the interval 33 to 82; that stretch reads DAKTSVFVADPKESFVKATVQSREGGKVTAKTEAGATVTVKEDQVFPMNP. A phosphothreonine mark is found at Thr64 and Thr69. In terms of domain architecture, Myosin motor spans 86-781; the sequence is DKIEDMAMMT…LLGLLEEMRD (696 aa). N6,N6,N6-trimethyllysine is present on Lys130. 179–186 contributes to the ATP binding site; that stretch reads GESGAGKT. Tyr389 bears the Phosphotyrosine mark. At Thr419 the chain carries Phosphothreonine. At Tyr424 the chain carries Phosphotyrosine. At Ser625 the chain carries Phosphoserine. Residues 658–680 form an actin-binding region; sequence LNKLMTNLRSTHPHFVRCIIPNE. His756 carries the post-translational modification Pros-methylhistidine. The interval 760 to 774 is actin-binding; it reads KFGHTKVFFKAGLLG. The 30-residue stretch at 784 to 813 folds into the IQ domain; that stretch reads LAQLITRTQARCRGFLARVEYQKMVERRES. Residues 842-1938 are a coiled coil; the sequence is LLKSAETEKE…EVHTKIISEE (1097 aa). A phosphoserine mark is found at Ser1091 and Ser1095. 2 disordered regions span residues 1124-1146 and 1152-1171; these read EIEA…SREL and RLEE…KKRE. A compositionally biased stretch (basic and acidic residues) spans 1127–1146; sequence AERASRAKAEKQRSDLSREL. Residues Ser1161 and Ser1236 each carry the phosphoserine modification. Thr1240 bears the Phosphothreonine mark. Ser1242 and Ser1260 each carry phosphoserine. 2 positions are modified to phosphothreonine: Thr1264 and Thr1285. Phosphoserine occurs at positions 1287, 1291, 1302, and 1305. Tyr1463 is subject to Phosphotyrosine. Phosphothreonine is present on Thr1466. Residue Ser1473 is modified to Phosphoserine. Phosphotyrosine is present on Tyr1491. At Ser1494 the chain carries Phosphoserine. Thr1500 bears the Phosphothreonine mark. At Ser1513 the chain carries Phosphoserine. Thr1516 is subject to Phosphothreonine. Phosphoserine is present on residues Ser1541, Ser1553, Ser1573, Ser1599, Ser1602, Ser1713, and Ser1725. Phosphothreonine occurs at positions 1729 and 1735.

It belongs to the TRAFAC class myosin-kinesin ATPase superfamily. Myosin family. As to quaternary structure, muscle myosin is a hexameric protein that consists of 2 heavy chain subunits (MHC), 2 alkali light chain subunits (MLC) and 2 regulatory light chain subunits (MLC-2). Interacts with SLC26A5.

The protein localises to the cytoplasm. The protein resides in the myofibril. Functionally, required for normal hearing. It plays a role in cochlear amplification of auditory stimuli, likely through the positive regulation of prestin (SLC26A5) activity and outer hair cell (OHC) electromotility. This is Myosin-1 (MYH1) from Bos taurus (Bovine).